Reading from the N-terminus, the 371-residue chain is MAKQTPLYQQHLADGAKMVDFHGWMMPLHYGSQLDEHHIVRREAGIFDVSHMTIVDLHGARTREFLRYLLANDVAKLTQPGKALYTGMLNASGGVIDDLIVYFLTEDYFRLVVNSATREKDLAWIEQHAAPFGIEIREREDLALVAVQGPQAQEKVQAILKAKGLSDADVAAVASMKPFFGKQAGDFFVATTGYTGEAGYEIALPNEQVVDFWQQLLAAGVKPCGLGARDTLRLEAGMNLYGQDMDEGISPLAANMGWTIAWQPEDRQFIGREALTHQREKGTDQLVGLVLTEKGVLRNDLPVRFTDSDGVMREGVITSGSFSPTLGVSIALARVPLGIGEQAIVQIRNRELPVHVTKPGFVRAGKAIVQY.

Belongs to the GcvT family. In terms of assembly, the glycine cleavage system is composed of four proteins: P, T, L and H.

It carries out the reaction N(6)-[(R)-S(8)-aminomethyldihydrolipoyl]-L-lysyl-[protein] + (6S)-5,6,7,8-tetrahydrofolate = N(6)-[(R)-dihydrolipoyl]-L-lysyl-[protein] + (6R)-5,10-methylene-5,6,7,8-tetrahydrofolate + NH4(+). Its function is as follows. The glycine cleavage system catalyzes the degradation of glycine. The sequence is that of Aminomethyltransferase from Pectobacterium carotovorum subsp. carotovorum (strain PC1).